The sequence spans 96 residues: Co-chaperonin GroES (96 aa).

The protein belongs to the GroES chaperonin family. Heptamer of 7 subunits arranged in a ring. Interacts with the chaperonin GroEL.

It localises to the cytoplasm. Functionally, together with the chaperonin GroEL, plays an essential role in assisting protein folding. The GroEL-GroES system forms a nano-cage that allows encapsulation of the non-native substrate proteins and provides a physical environment optimized to promote and accelerate protein folding. GroES binds to the apical surface of the GroEL ring, thereby capping the opening of the GroEL channel. The sequence is that of Co-chaperonin GroES from Caulobacter vibrioides (strain ATCC 19089 / CIP 103742 / CB 15) (Caulobacter crescentus).